We begin with the raw amino-acid sequence, 141 residues long: Ribonuclease P protein component (141 aa).

2 disordered regions span residues 37-56 (RTEEESNAAKTGDNPRVGFT) and 114-141 (RRITAKGERRSGGKRRTERPEPGPVNGK). The segment covering 114–124 (RRITAKGERRS) has biased composition (basic and acidic residues).

This sequence belongs to the RnpA family. In terms of assembly, consists of a catalytic RNA component (M1 or rnpB) and a protein subunit.

The enzyme catalyses Endonucleolytic cleavage of RNA, removing 5'-extranucleotides from tRNA precursor.. Functionally, RNaseP catalyzes the removal of the 5'-leader sequence from pre-tRNA to produce the mature 5'-terminus. It can also cleave other RNA substrates such as 4.5S RNA. The protein component plays an auxiliary but essential role in vivo by binding to the 5'-leader sequence and broadening the substrate specificity of the ribozyme. The chain is Ribonuclease P protein component from Brucella melitensis biotype 1 (strain ATCC 23456 / CCUG 17765 / NCTC 10094 / 16M).